A 426-amino-acid polypeptide reads, in one-letter code: Serine hydroxymethyltransferase (426 aa).

Residues Leu121 and 125–127 (GHL) each bind (6S)-5,6,7,8-tetrahydrofolate. An N6-(pyridoxal phosphate)lysine modification is found at Lys230. Residue 354 to 356 (SPF) participates in (6S)-5,6,7,8-tetrahydrofolate binding.

Belongs to the SHMT family. In terms of assembly, homodimer. It depends on pyridoxal 5'-phosphate as a cofactor.

The protein localises to the cytoplasm. It carries out the reaction (6R)-5,10-methylene-5,6,7,8-tetrahydrofolate + glycine + H2O = (6S)-5,6,7,8-tetrahydrofolate + L-serine. It functions in the pathway one-carbon metabolism; tetrahydrofolate interconversion. The protein operates within amino-acid biosynthesis; glycine biosynthesis; glycine from L-serine: step 1/1. Catalyzes the reversible interconversion of serine and glycine with tetrahydrofolate (THF) serving as the one-carbon carrier. This reaction serves as the major source of one-carbon groups required for the biosynthesis of purines, thymidylate, methionine, and other important biomolecules. Also exhibits THF-independent aldolase activity toward beta-hydroxyamino acids, producing glycine and aldehydes, via a retro-aldol mechanism. The chain is Serine hydroxymethyltransferase from Gloeobacter violaceus (strain ATCC 29082 / PCC 7421).